The following is an 887-amino-acid chain: Ubiquitin carboxyl-terminal hydrolase 4 (887 aa).

The region spanning Lys-202–Lys-328 is the Rhodanese domain. 2 disordered regions span residues Ala-358–Pro-465 and Gln-484–Arg-505. Residues Thr-387–Val-402 show a composition bias toward polar residues. Residues Val-525–Ile-885 form the USP domain. Cys-534 (nucleophile) is an active-site residue. His-842 (proton acceptor) is an active-site residue.

This sequence belongs to the peptidase C19 family.

Its subcellular location is the cytoplasm. The protein localises to the late endosome membrane. It carries out the reaction Thiol-dependent hydrolysis of ester, thioester, amide, peptide and isopeptide bonds formed by the C-terminal Gly of ubiquitin (a 76-residue protein attached to proteins as an intracellular targeting signal).. Its activity is regulated as follows. RFU1 is an inhibitor of deubiquitination activity. Ubiquitin thioesterase that acts at the late endosome/prevacuolar compartment to recover ubiquitin from ubiquitinated membrane proteins en route to the vacuole. Also removes ubiquitin from soluble proteins targeted to proteasomes. Is essential to maintain a normal level of free ubiquitin. Required for promoting coordination of DNA replication and avoids DNA overreplication. The polypeptide is Ubiquitin carboxyl-terminal hydrolase 4 (DOA4) (Candida glabrata (strain ATCC 2001 / BCRC 20586 / JCM 3761 / NBRC 0622 / NRRL Y-65 / CBS 138) (Yeast)).